The following is a 486-amino-acid chain: Aspartyl/glutamyl-tRNA(Asn/Gln) amidotransferase subunit B (486 aa).

This sequence belongs to the GatB/GatE family. GatB subfamily. Heterotrimer of A, B and C subunits.

It carries out the reaction L-glutamyl-tRNA(Gln) + L-glutamine + ATP + H2O = L-glutaminyl-tRNA(Gln) + L-glutamate + ADP + phosphate + H(+). It catalyses the reaction L-aspartyl-tRNA(Asn) + L-glutamine + ATP + H2O = L-asparaginyl-tRNA(Asn) + L-glutamate + ADP + phosphate + 2 H(+). Allows the formation of correctly charged Asn-tRNA(Asn) or Gln-tRNA(Gln) through the transamidation of misacylated Asp-tRNA(Asn) or Glu-tRNA(Gln) in organisms which lack either or both of asparaginyl-tRNA or glutaminyl-tRNA synthetases. The reaction takes place in the presence of glutamine and ATP through an activated phospho-Asp-tRNA(Asn) or phospho-Glu-tRNA(Gln). This Janthinobacterium sp. (strain Marseille) (Minibacterium massiliensis) protein is Aspartyl/glutamyl-tRNA(Asn/Gln) amidotransferase subunit B.